A 309-amino-acid polypeptide reads, in one-letter code: tRNA dimethylallyltransferase (309 aa).

9-16 (GPTAVGKT) provides a ligand contact to ATP. 11-16 (TAVGKT) is a substrate binding site. Residues 34–37 (DSMQ) form an interaction with substrate tRNA region.

Belongs to the IPP transferase family. As to quaternary structure, monomer. Mg(2+) serves as cofactor.

It carries out the reaction adenosine(37) in tRNA + dimethylallyl diphosphate = N(6)-dimethylallyladenosine(37) in tRNA + diphosphate. Functionally, catalyzes the transfer of a dimethylallyl group onto the adenine at position 37 in tRNAs that read codons beginning with uridine, leading to the formation of N6-(dimethylallyl)adenosine (i(6)A). This chain is tRNA dimethylallyltransferase, found in Clostridium acetobutylicum (strain ATCC 824 / DSM 792 / JCM 1419 / IAM 19013 / LMG 5710 / NBRC 13948 / NRRL B-527 / VKM B-1787 / 2291 / W).